Here is a 491-residue protein sequence, read N- to C-terminus: Anthranilate synthase component 1 (491 aa).

Residues serine 49 and 271 to 273 (PYL) each bind L-tryptophan. Residue 306 to 307 (GT) coordinates chorismate. Glutamate 333 serves as a coordination point for Mg(2+). Chorismate contacts are provided by residues tyrosine 421, arginine 441, 455-457 (GAG), and glycine 457. Glutamate 470 is a Mg(2+) binding site.

Belongs to the anthranilate synthase component I family. In terms of assembly, heterotetramer consisting of two non-identical subunits: a beta subunit (TrpG) and a large alpha subunit (TrpE). It depends on Mg(2+) as a cofactor.

It catalyses the reaction chorismate + L-glutamine = anthranilate + pyruvate + L-glutamate + H(+). Its pathway is amino-acid biosynthesis; L-tryptophan biosynthesis; L-tryptophan from chorismate: step 1/5. Feedback inhibited by tryptophan. Part of a heterotetrameric complex that catalyzes the two-step biosynthesis of anthranilate, an intermediate in the biosynthesis of L-tryptophan. In the first step, the glutamine-binding beta subunit (TrpG) of anthranilate synthase (AS) provides the glutamine amidotransferase activity which generates ammonia as a substrate that, along with chorismate, is used in the second step, catalyzed by the large alpha subunit of AS (TrpE) to produce anthranilate. In the absence of TrpG, TrpE can synthesize anthranilate directly from chorismate and high concentrations of ammonia. The sequence is that of Anthranilate synthase component 1 (trpE) from Neisseria meningitidis serogroup B (strain ATCC BAA-335 / MC58).